Here is a 419-residue protein sequence, read N- to C-terminus: N-acylglucosamine 2-epimerase (419 aa).

The leucine-zipper stretch occupies residues 185-206; sequence LLSLVEQLGEEDEELTNMYAEL. Residue S418 is modified to Phosphoserine.

The protein belongs to the N-acylglucosamine 2-epimerase family. Homodimer. Forms a heterodimer with renin and inhibits its activity.

It catalyses the reaction an N-acyl-D-glucosamine = an N-acyl-D-mannosamine. The protein operates within amino-sugar metabolism; N-acetylneuraminate degradation. Functionally, catalyzes the interconversion of N-acetylglucosamine to N-acetylmannosamine. Involved in the N-glycolylneuraminic acid (Neu5Gc) degradation pathway. This chain is N-acylglucosamine 2-epimerase (Renbp), found in Mus musculus (Mouse).